We begin with the raw amino-acid sequence, 1223 residues long: ATP-dependent DNA helicase P143 (1223 aa).

A Nuclear localization signal motif is present at residues 692–701 (RKCRCVQKIK). 919 to 926 (GVPLSGKS) is a binding site for ATP. Positions 967 to 981 (TINELKKCSESFFKK) form a DNA-binding region, H-T-H motif.

It localises to the host nucleus. It carries out the reaction ATP + H2O = ADP + phosphate + H(+). Functionally, essential for the initiation of viral DNA replication, it may contribute to other functions such as controlling the switch to the late phase and leading to the inhibition of host protein synthesis. Required for late and very late gene expression. The polypeptide is ATP-dependent DNA helicase P143 (P143) (Orgyia pseudotsugata multicapsid polyhedrosis virus (OpMNPV)).